The chain runs to 455 residues: Keratin, type I cuticular Ha5 (455 aa).

A head region spans residues 1–97; that stretch reads MASKCLKAGF…FGEGILTGNE (97 aa). Positions 97 to 408 constitute an IF rod domain; that stretch reads EKETMQSLND…GLLESEDSKL (312 aa). Residues 98-132 are coil 1A; it reads KETMQSLNDRLAGYLEKVRQLEQENASLESRIREW. The tract at residues 133-143 is linker 1; that stretch reads CEQQVPYMCPD. The tract at residues 144–244 is coil 1B; it reads YQSYFRTIEE…HEEEVNSLRC (101 aa). A linker 12 region spans residues 245-260; it reads QLGDRLNVEVDAAPPV. Positions 261–404 are coil 2; sequence DLNRVLEEMR…NTYRGLLESE (144 aa). Positions 405 to 455 are tail; sequence DSKLPCNPCAPDYSPSKSCLPCLPAASCGPSAARTNCSPRPICVPCPGGRF.

The protein belongs to the intermediate filament family. In terms of tissue distribution, early expression in the hair follicle, mainly found in supramatricial cells and lowermost cortical cells of the hair bulb.

This chain is Keratin, type I cuticular Ha5 (KRT35), found in Homo sapiens (Human).